The following is a 494-amino-acid chain: Protein transport protein Sec61 subunit alpha (494 aa).

A run of 10 helical transmembrane segments spans residues 36 to 56 (LWTS…LYGI), 79 to 99 (LMEL…LLAG), 122 to 142 (LLGI…GMYG), 147 to 167 (LGAG…IIVI), 177 to 197 (YGIG…SIVW), 249 to 269 (LLAT…QVEL), 294 to 314 (MPII…QILY), 359 to 379 (IVSD…SCAL), 426 to 446 (AAFG…MGAI), and 450 to 470 (TGIL…LLAV).

The protein belongs to the SecY/SEC61-alpha family. In terms of assembly, heterotrimeric complex composed of SEC61-alpha, SEC61-beta and SEC61-gamma.

It localises to the endoplasmic reticulum membrane. Functionally, appears to play a crucial role in the insertion of secretory and membrane polypeptides into the ER. It is required for assembly of membrane and secretory proteins. In Pyrenomonas salina, this protein is Protein transport protein Sec61 subunit alpha.